The primary structure comprises 152 residues: CMT1A duplicated region transcript 4 protein (152 aa).

A compositionally biased stretch (basic and acidic residues) spans 1-11; sequence MDARRMKKEEG. 2 disordered regions span residues 1 to 23 and 60 to 89; these read MDAR…RKLL and ERPW…GKAV. The span at 65-74 shows a compositional bias: polar residues; it reads SRQNKPSSVI.

As to expression, expressed in fetal skeletal muscle and kidney.

The protein is CMT1A duplicated region transcript 4 protein (CDRT4) of Homo sapiens (Human).